Consider the following 37-residue polypeptide: MSDIN-like toxin proprotein 5 (37 aa).

The propeptide occupies 1-10; that stretch reads MSDINATRLP. Residues 11–20 constitute a cross-link (cyclopeptide (Leu-Pro)); the sequence is LFFPPDFRPP. Positions 21 to 37 are excised as a propeptide; that stretch reads CVGDADNFTLTRGENLC.

It belongs to the MSDIN fungal toxin family. Post-translationally, processed by the macrocyclase-peptidase enzyme POPB to yield a toxic cyclic decapeptide. POPB first removes 10 residues from the N-terminus. Conformational trapping of the remaining peptide forces the enzyme to release this intermediate rather than proceed to macrocyclization. The enzyme rebinds the remaining peptide in a different conformation and catalyzes macrocyclization of the N-terminal 10 residues. As to expression, expressed in basidiocarps.

Functionally, probable toxin that belongs to the MSDIN-like toxin family responsible for a large number of food poisoning cases and deaths. In Amanita exitialis (Guangzhou destroying angel), this protein is MSDIN-like toxin proprotein 5.